Here is a 295-residue protein sequence, read N- to C-terminus: ATP-dependent (S)-NAD(P)H-hydrate dehydratase (295 aa).

A YjeF C-terminal domain is found at 9–289 (LLERARNLVP…DQIHQVFDDL (281 aa)). (6S)-NADPHX is bound by residues Gly-109 and 162 to 168 (NAIEFCR). ATP is bound by residues 193-197 (KGLND) and 214-223 (GSGRRCGGQG). Asp-224 contributes to the (6S)-NADPHX binding site.

It belongs to the NnrD/CARKD family. The cofactor is Mg(2+).

It carries out the reaction (6S)-NADHX + ATP = ADP + phosphate + NADH + H(+). The catalysed reaction is (6S)-NADPHX + ATP = ADP + phosphate + NADPH + H(+). Catalyzes the dehydration of the S-form of NAD(P)HX at the expense of ATP, which is converted to ADP. Together with NAD(P)HX epimerase, which catalyzes the epimerization of the S- and R-forms, the enzyme allows the repair of both epimers of NAD(P)HX, a damaged form of NAD(P)H that is a result of enzymatic or heat-dependent hydration. The protein is ATP-dependent (S)-NAD(P)H-hydrate dehydratase of Anopheles darlingi (Mosquito).